A 181-amino-acid polypeptide reads, in one-letter code: Alkyl hydroperoxide reductase AhpD (181 aa).

C131 (proton donor) is an active-site residue. A disulfide bond links C131 and C134. The active-site Cysteine sulfenic acid (-SOH) intermediate is the C134.

It belongs to the AhpD family.

The enzyme catalyses N(6)-[(R)-dihydrolipoyl]-L-lysyl-[lipoyl-carrier protein] + a hydroperoxide = N(6)-[(R)-lipoyl]-L-lysyl-[lipoyl-carrier protein] + an alcohol + H2O. Antioxidant protein with alkyl hydroperoxidase activity. Required for the reduction of the AhpC active site cysteine residues and for the regeneration of the AhpC enzyme activity. The chain is Alkyl hydroperoxide reductase AhpD from Bradyrhizobium sp. (strain BTAi1 / ATCC BAA-1182).